The primary structure comprises 135 residues: Protein NrdI (135 aa).

Belongs to the NrdI family.

In terms of biological role, probably involved in ribonucleotide reductase function. This Salmonella gallinarum (strain 287/91 / NCTC 13346) protein is Protein NrdI.